Reading from the N-terminus, the 298-residue chain is Zinc import ATP-binding protein ZnuC (298 aa).

One can recognise an ABC transporter domain in the interval 17-232 (IELRNAGVYR…PEYVRLFGSR (216 aa)). 49 to 56 (GPNGAGKS) provides a ligand contact to ATP. Positions 273–298 (RGHCHVEDGHHHDHEHHHHEGGQPRA) are disordered. Basic and acidic residues predominate over residues 276–298 (CHVEDGHHHDHEHHHHEGGQPRA).

Belongs to the ABC transporter superfamily. Zinc importer (TC 3.A.1.15.5) family. In terms of assembly, the complex is composed of two ATP-binding proteins (ZnuC), two transmembrane proteins (ZnuB) and a solute-binding protein (ZnuA).

It localises to the cell inner membrane. The catalysed reaction is Zn(2+)(out) + ATP(in) + H2O(in) = Zn(2+)(in) + ADP(in) + phosphate(in) + H(+)(in). Its function is as follows. Part of the ABC transporter complex ZnuABC involved in zinc import. Responsible for energy coupling to the transport system. The chain is Zinc import ATP-binding protein ZnuC from Brucella abortus (strain 2308).